Reading from the N-terminus, the 137-residue chain is Large ribosomal subunit protein uL13 (137 aa).

It belongs to the universal ribosomal protein uL13 family. As to quaternary structure, part of the 50S ribosomal subunit.

Functionally, this protein is one of the early assembly proteins of the 50S ribosomal subunit, although it is not seen to bind rRNA by itself. It is important during the early stages of 50S assembly. The chain is Large ribosomal subunit protein uL13 from Methanococcus maripaludis (strain DSM 14266 / JCM 13030 / NBRC 101832 / S2 / LL).